The following is a 372-amino-acid chain: Pyrimidine monooxygenase RutA (372 aa).

FMN is bound by residues 57–58 (IK), N123, E132, 148–149 (RY), and S198.

It belongs to the NtaA/SnaA/DszA monooxygenase family. RutA subfamily.

The catalysed reaction is uracil + FMNH2 + NADH + O2 = (Z)-3-ureidoacrylate + FMN + NAD(+) + H2O + H(+). It carries out the reaction thymine + FMNH2 + NADH + O2 = (Z)-2-methylureidoacrylate + FMN + NAD(+) + H2O + H(+). Its function is as follows. Catalyzes the pyrimidine ring opening between N-3 and C-4 by an unusual flavin hydroperoxide-catalyzed mechanism, adding oxygen atoms in the process to yield ureidoacrylate peracid, that immediately reacts with FMN forming ureidoacrylate and FMN-N(5)-oxide. The FMN-N(5)-oxide reacts spontaneously with NADH to produce FMN. Requires the flavin reductase RutF to regenerate FMN in vivo. This is Pyrimidine monooxygenase RutA from Methylorubrum extorquens (strain PA1) (Methylobacterium extorquens).